The chain runs to 935 residues: Peptidyl-glycine alpha-amidating monooxygenase A (935 aa).

A signal peptide spans Met-1 to Thr-36. A peptidylglycine alpha-hydroxylating monooxygenase region spans residues Met-1–Gln-390. The Intragranular portion of the chain corresponds to Arg-37 to Phe-825. Disulfide bonds link Cys-43–Cys-182, Cys-77–Cys-122, Cys-110–Cys-127, Cys-223–Cys-330, and Cys-289–Cys-311. Cu(2+) is bound by residues His-103 and His-104. 4 residues coordinate Cu(2+): His-168, His-238, His-240, and Met-310. A disordered region spans residues His-362–Glu-385. The tract at residues Asp-391–Val-712 is peptidyl-alpha-hydroxyglycine alpha-amidating lyase. A protein is bound at residue Arg-426. 3 NHL repeats span residues Ser-463–Gly-504, Leu-512–Asn-557, and Gly-565–Glu-609. 2 disulfides stabilise this stretch: Cys-526/Cys-547 and Cys-594/Cys-605. A protein contacts are provided by Tyr-546 and Arg-598. Asn-658 carries N-linked (GlcNAc...) asparagine glycosylation. The stretch at Gly-662–Ser-705 is one NHL 4 repeat. A compositionally biased stretch (basic and acidic residues) spans Phe-728–Gln-751. Disordered regions lie at residues Phe-728 to Lys-764 and Gln-778 to Lys-812. The N-linked (GlcNAc...) asparagine glycan is linked to Asn-739. Polar residues predominate over residues Asn-755–Lys-764. A helical membrane pass occupies residues Val-826 to Ile-846. At Arg-847 to Ser-935 the chain is on the cytoplasmic side. The segment at Lys-896–Ser-935 is disordered. The segment covering Glu-909–Tyr-922 has biased composition (acidic residues). A compositionally biased stretch (pro residues) spans Pro-925–Ser-935.

This sequence in the C-terminal section; belongs to the peptidyl-alpha-hydroxyglycine alpha-amidating lyase family. In the N-terminal section; belongs to the copper type II ascorbate-dependent monooxygenase family. As to quaternary structure, monomer. It depends on Zn(2+) as a cofactor. Requires Cu(2+) as cofactor.

It localises to the cytoplasmic vesicle. Its subcellular location is the secretory vesicle membrane. The catalysed reaction is a [peptide]-C-terminal glycine + 2 L-ascorbate + O2 = a [peptide]-C-terminal (2S)-2-hydroxyglycine + 2 monodehydro-L-ascorbate radical + H2O. It carries out the reaction a [peptide]-C-terminal (2S)-2-hydroxyglycine = a [peptide]-C-terminal amide + glyoxylate. Functionally, bifunctional enzyme that catalyzes amidation of the C-terminus of proteins. Alpha-amidation is present at the C-terminus of many endocrine hormones and neuropeptides and is required for their activity. C-terminal amidation also takes place in response to protein fragmentation triggered by oxidative stress, promoting degradation of amidated protein fragments by the proteasome. Alpha-amidation involves two sequential reactions, both of which are catalyzed by separate catalytic domains of the enzyme. The first step, catalyzed by peptidyl alpha-hydroxylating monooxygenase (PHM) domain, is the copper-, ascorbate-, and O2- dependent stereospecific hydroxylation (with S stereochemistry) at the alpha-carbon (C-alpha) of the C-terminal glycine of the peptidylglycine substrate. The second step, catalyzed by the peptidylglycine amidoglycolate lyase (PAL) domain, is the zinc-dependent cleavage of the N-C-alpha bond, producing the alpha-amidated peptide and glyoxylate. The protein is Peptidyl-glycine alpha-amidating monooxygenase A (pam-a) of Xenopus laevis (African clawed frog).